The chain runs to 190 residues: MGYRNGNYAAFYVSEPFSESSLGANATKDFVSYNMLRAWKGKDNNYPFNDSHDKTYNVRDGSDWEKTLKPRLRKRLDQSKNIIFFLSKHTENSKALREEIDYGINVKGLPVIVVYPELSEKSDIIDCTTKVFRSEVVNLWSRVPVFKDSMLKVPTIHIPYKKDQIKKALENKDFMINSKISAGSVYFYPC.

It belongs to the Thoeris B TIR-like family. As to quaternary structure, homodimer.

It is found in the cytoplasm. Its activity is regulated as follows. Activated upon phage infection. Its function is as follows. TIR-like domain-containing component of the Thoeris antiviral defense system, composed of ThsA and ThsB. Expression of ThsA and ThsB in B.subtilis (strain BEST7003) confers resistance to phages SBSphiC, SBSphiJ and SPO1. Phage infection activates this protein, generating a signal molecule that in turn activates ThsA. Functionally, probably hydrolyzes NAD(+) to make a cyclic ADP-D-ribose (cADPR) signaling molecule; might make 3'cADPR. The chain is Putative cyclic ADP-D-ribose synthase ThsB from Bacillus amyloliquefaciens (strain Y2) (Bacillus amyloliquefaciens subsp. plantarum (strain B9601-Y2)).